The primary structure comprises 688 residues: Polyribonucleotide nucleotidyltransferase (688 aa).

Positions 484 and 490 each coordinate Mg(2+). The KH domain occupies 550 to 609; it reads PTTEIFNVAPDKIVEIIGQGGRVIKEIVEKFEVKIDLNKPSGEVKIMGNKERVLKTKEFI. Residues 626–688 enclose the S1 motif domain; it reads DEVLEAQVKR…NKGKIALDLA (63 aa).

Belongs to the polyribonucleotide nucleotidyltransferase family. Mg(2+) is required as a cofactor.

It localises to the cytoplasm. It carries out the reaction RNA(n+1) + phosphate = RNA(n) + a ribonucleoside 5'-diphosphate. In terms of biological role, involved in mRNA degradation. Catalyzes the phosphorolysis of single-stranded polyribonucleotides processively in the 3'- to 5'-direction. The sequence is that of Polyribonucleotide nucleotidyltransferase from Helicobacter pylori (strain P12).